A 150-amino-acid chain; its full sequence is Non-specific lipid transfer protein GPI-anchored 7 (150 aa).

Residues Met1–Ala25 form the signal peptide. Disulfide bonds link Cys29–Cys66, Cys36–Cys50, Cys51–Cys92, and Cys64–Cys101. 3 N-linked (GlcNAc...) asparagine glycosylation sites follow: Asn41, Asn79, and Asn93. The tract at residues Ala103 to Asp125 is disordered. The GPI-anchor amidated aspartate moiety is linked to residue Asp125. A propeptide spans Ala126–Phe150 (removed in mature form).

It belongs to the plant LTP family. As to expression, up-regulated in the epidermis of stems.

The protein resides in the cell membrane. Probable lipid transfer protein. The chain is Non-specific lipid transfer protein GPI-anchored 7 from Arabidopsis thaliana (Mouse-ear cress).